Consider the following 879-residue polypeptide: Alanine--tRNA ligase (879 aa).

His566, His570, Cys668, and His672 together coordinate Zn(2+).

This sequence belongs to the class-II aminoacyl-tRNA synthetase family. Requires Zn(2+) as cofactor.

The protein localises to the cytoplasm. It carries out the reaction tRNA(Ala) + L-alanine + ATP = L-alanyl-tRNA(Ala) + AMP + diphosphate. In terms of biological role, catalyzes the attachment of alanine to tRNA(Ala) in a two-step reaction: alanine is first activated by ATP to form Ala-AMP and then transferred to the acceptor end of tRNA(Ala). Also edits incorrectly charged Ser-tRNA(Ala) and Gly-tRNA(Ala) via its editing domain. In Clostridium botulinum (strain Hall / ATCC 3502 / NCTC 13319 / Type A), this protein is Alanine--tRNA ligase.